The primary structure comprises 597 residues: 2-isopropylmalate synthase (597 aa).

The tract at residues 1–80 is unknown; that stretch reads MQLDIDRLVA…QKNESLERTE (80 aa). The region spanning 87-349 is the Pyruvate carboxyltransferase domain; sequence VIIFDTTLRD…ETGIDTTQIV (263 aa). Positions 87–349 are 2-isopropylmalate synthase; that stretch reads VIIFDTTLRD…ETGIDTTQIV (263 aa). 4 residues coordinate Mn(2+): Asp96, His284, His286, and Asn320. The regulatory domain stretch occupies residues 475-597; sequence KFISQKISTE…KPKAQGSGTI (123 aa).

The protein belongs to the alpha-IPM synthase/homocitrate synthase family. LeuA type 1 subfamily. In terms of assembly, homodimer. Requires Mn(2+) as cofactor.

Its subcellular location is the cytoplasm. The catalysed reaction is 3-methyl-2-oxobutanoate + acetyl-CoA + H2O = (2S)-2-isopropylmalate + CoA + H(+). It functions in the pathway amino-acid biosynthesis; L-leucine biosynthesis; L-leucine from 3-methyl-2-oxobutanoate: step 1/4. Functionally, catalyzes the condensation of the acetyl group of acetyl-CoA with 3-methyl-2-oxobutanoate (2-ketoisovalerate) to form 3-carboxy-3-hydroxy-4-methylpentanoate (2-isopropylmalate). In Neisseria gonorrhoeae (strain ATCC 700825 / FA 1090), this protein is 2-isopropylmalate synthase.